The primary structure comprises 470 residues: Cyclic AMP-responsive element-binding protein 3-like protein 3 (470 aa).

Topologically, residues 1–319 (MDGDISTGKM…TSKPAHAGTC (319 aa)) are cytoplasmic. The interval 59 to 145 (SDSDEFLNSI…PEPPRTQVHE (87 aa)) is disordered. One can recognise a bZIP domain in the interval 239–302 (VLKKIRRKIR…LSLLEQLKHL (64 aa)). The basic motif stretch occupies residues 241-270 (KKIRRKIRNKQSAQESRKKKKEYIDGLENR). Positions 281-302 (LQRKVLHLEKQNLSLLEQLKHL) are leucine-zipper. A Glycyl lysine isopeptide (Lys-Gly) (interchain with G-Cter in ubiquitin) cross-link involves residue Lys290. The chain crosses the membrane as a helical; Signal-anchor for type II membrane protein span at residues 320 to 340 (IAVLLLSFVLIILPSISPFTA). Residues 341 to 470 (NKVDSPGDFI…RVVQDALGVL (130 aa)) lie on the Lumenal side of the membrane. Residues Asn410 and Asn417 are each glycosylated (N-linked (GlcNAc...) asparagine).

It belongs to the bZIP family. ATF subfamily. Binds DNA as a dimer. May form homodimers. Interacts with ATF6. Interacts with SYNV1/HRD1; this interaction leads to CREB3L3 ubiquitination and proteasomal degradation. Post-translationally, controlled by regulated intramembrane proteolysis (RIP). Following ER stress a fragment containing the cytoplasmic transcription factor domain is released by proteolysis. The cleavage seems to be performed sequentially by site-1 and site-2 proteases (PS1 and PS2). In terms of processing, N-glycosylation is required for optimal proteolytic activation. Ubiquitinated at Lys-290 by SYNV1/HRD1 via 'Lys-27'-linked ubiquitin.

It localises to the endoplasmic reticulum membrane. It is found in the nucleus. In terms of biological role, transcription factor that may act during endoplasmic reticulum stress by activating unfolded protein response target genes. Activated in response to cAMP stimulation. Binds the cAMP response element (CRE). Activates transcription through box-B element and CRE. Seems to function synergistically with ATF6. In acute inflammatory response, may activate expression of acute phase response (APR) genes. May be involved in growth suppression. Regulates FGF21 transcription. Plays a crucial role in the regulation of triglyceride metabolism and is required for the maintenance of normal plasma triglyceride concentrations. This is Cyclic AMP-responsive element-binding protein 3-like protein 3 (Creb3l3) from Rattus norvegicus (Rat).